The primary structure comprises 71 residues: Large ribosomal subunit protein bL31 (71 aa).

C16, C18, C38, and C41 together coordinate Zn(2+).

It belongs to the bacterial ribosomal protein bL31 family. Type A subfamily. As to quaternary structure, part of the 50S ribosomal subunit. Zn(2+) serves as cofactor.

Its function is as follows. Binds the 23S rRNA. The polypeptide is Large ribosomal subunit protein bL31 (Neisseria gonorrhoeae (strain ATCC 700825 / FA 1090)).